Reading from the N-terminus, the 245-residue chain is Ubiquinone/menaquinone biosynthesis C-methyltransferase UbiE (245 aa).

Residues threonine 71, aspartate 92, and 118 to 119 (DA) each bind S-adenosyl-L-methionine.

The protein belongs to the class I-like SAM-binding methyltransferase superfamily. MenG/UbiE family.

It carries out the reaction a 2-demethylmenaquinol + S-adenosyl-L-methionine = a menaquinol + S-adenosyl-L-homocysteine + H(+). The enzyme catalyses a 2-methoxy-6-(all-trans-polyprenyl)benzene-1,4-diol + S-adenosyl-L-methionine = a 5-methoxy-2-methyl-3-(all-trans-polyprenyl)benzene-1,4-diol + S-adenosyl-L-homocysteine + H(+). It functions in the pathway quinol/quinone metabolism; menaquinone biosynthesis; menaquinol from 1,4-dihydroxy-2-naphthoate: step 2/2. The protein operates within cofactor biosynthesis; ubiquinone biosynthesis. Methyltransferase required for the conversion of demethylmenaquinol (DMKH2) to menaquinol (MKH2) and the conversion of 2-polyprenyl-6-methoxy-1,4-benzoquinol (DDMQH2) to 2-polyprenyl-3-methyl-6-methoxy-1,4-benzoquinol (DMQH2). In Neisseria meningitidis serogroup B (strain ATCC BAA-335 / MC58), this protein is Ubiquinone/menaquinone biosynthesis C-methyltransferase UbiE.